The sequence spans 235 residues: NifU-like protein 2, chloroplastic (235 aa).

Residues 1 to 16 (MQLLTLNPAAISRTPP) constitute a chloroplast transit peptide.

It belongs to the NifU family. Homodimer; disulfide-linked. [2Fe-2S] cluster serves as cofactor. As to expression, predominantly expressed in leaves and floral stalks. Ubiquitous (at protein level).

The protein localises to the plastid. Its subcellular location is the chloroplast stroma. Molecular scaffold for [Fe-S] cluster assembly of chloroplastic iron-sulfur proteins. Required for biogenesis of ferredoxin, a major photosynthetic electron carrier containing [2Fe-2S] cluster. Required for the assembly of photosystem I complex. In Arabidopsis thaliana (Mouse-ear cress), this protein is NifU-like protein 2, chloroplastic (NIFU2).